Consider the following 287-residue polypeptide: Probable endonuclease 4 (287 aa).

The Zn(2+) site is built by H69, H109, E144, D178, H181, H215, D228, H230, and E260.

This sequence belongs to the AP endonuclease 2 family. Zn(2+) is required as a cofactor.

It catalyses the reaction Endonucleolytic cleavage to 5'-phosphooligonucleotide end-products.. In terms of biological role, endonuclease IV plays a role in DNA repair. It cleaves phosphodiester bonds at apurinic or apyrimidinic (AP) sites, generating a 3'-hydroxyl group and a 5'-terminal sugar phosphate. This is Probable endonuclease 4 from Thermotoga sp. (strain RQ2).